The primary structure comprises 156 residues: Small ribosomal subunit protein uS7 (156 aa).

This sequence belongs to the universal ribosomal protein uS7 family. In terms of assembly, part of the 30S ribosomal subunit. Contacts proteins S9 and S11.

In terms of biological role, one of the primary rRNA binding proteins, it binds directly to 16S rRNA where it nucleates assembly of the head domain of the 30S subunit. Is located at the subunit interface close to the decoding center, probably blocks exit of the E-site tRNA. This Histophilus somni (strain 129Pt) (Haemophilus somnus) protein is Small ribosomal subunit protein uS7.